Reading from the N-terminus, the 282-residue chain is MKRVGAHVSASGGVEQAPLNATAIGAKAFALFTKNQRQWKAPKLSKATIEAFQKACADGGFQPQHILPHDSYLINLGSPDPEKLERARSAFIDEMQRVADLGLQLLNFHPGSHLKEISEEASLLLIAESINMALEATNGVTAVIENTAGQGTNLGYRFEQIAFLIDRIEDKSRVGVCLDTCHLFASGYDLSSTEAIETTFNEFDSTVGLHYLRGMHLNDAMQPLGSRVDRHASLGKGTIGMAAFTFIMNHPACEEIPLILETPNPDIWSEEIALLYSLQQVD.

Positions 69, 109, 145, 179, 182, 216, 229, 231, and 261 each coordinate Zn(2+).

The protein belongs to the AP endonuclease 2 family. The cofactor is Zn(2+).

It catalyses the reaction Endonucleolytic cleavage to 5'-phosphooligonucleotide end-products.. In terms of biological role, endonuclease IV plays a role in DNA repair. It cleaves phosphodiester bonds at apurinic or apyrimidinic (AP) sites, generating a 3'-hydroxyl group and a 5'-terminal sugar phosphate. This Chlorobium chlorochromatii (strain CaD3) protein is Probable endonuclease 4.